Consider the following 389-residue polypeptide: Aromatic-amino-acid aminotransferase 2 (389 aa).

K233 carries the N6-(pyridoxal phosphate)lysine modification.

This sequence belongs to the class-I pyridoxal-phosphate-dependent aminotransferase family. Homodimer. Pyridoxal 5'-phosphate is required as a cofactor.

It carries out the reaction an aromatic L-alpha-amino acid + 2-oxoglutarate = an aromatic oxo-acid + L-glutamate. Functionally, catalyzes the transamination of phenylalanine, tyrosine and tryptophan. Shows virtually no activity towards aspartic acid, alanine, valine or isoleucine. The protein is Aromatic-amino-acid aminotransferase 2 of Thermococcus litoralis (strain ATCC 51850 / DSM 5473 / JCM 8560 / NS-C).